The primary structure comprises 355 residues: MADKSHVNNVPMQGNGAYSSHAALQHEAMLKALPLFQAAAEVIANVDSTRISIVEYGSAHGNNSLEPMEAILKSIPTESLELLFSDRPENDFCTLSKTVTAWADGIVGNQLLNPLFISMIPRSFYQQVVPPKSAHLGFSLAALHHLDHVPQPTEDGQDESELLQQQAHVDLATFLKLRSQEIVSGGSLILSFVSQASAGYENYSGPVDACRNAMIEMVQQGKIPLSVAQAFRVPTYNRTLSDVKKVMDEFTQTWKVHDLFEDDVMHPAFHKLKIQSNPSLEASHKYAEVVIDWMMAVCSGYFTKALQVGSQGGYTKQEEEGLLQVWVTRTKEFFIRDYKDKEVICSFIYIRLERL.

S-adenosyl-L-homocysteine is bound by residues Tyr-18, Asn-63, Asp-86, Ser-123, and Phe-124. Phe-231 is a Mg(2+) binding site.

It belongs to the methyltransferase superfamily. Type-7 methyltransferase family. Mg(2+) serves as cofactor.

Its pathway is mycotoxin biosynthesis. Methyltransferase; part of the gene cluster that mediates the biosynthesis of the mycotoxin fusarin C. Within the cluster, FUS1, FUS2, FUS8 and FUS9 are sufficient for fusarin production. The roles of the other FUS members are yet undetermined. The fusarin C synthetase FUS1 is responsible for the condensation of one acetyl-coenzyme A (CoA) unit with six malonyl-CoA units and the amide linkage of the arising heptaketide and homoserine, subsequently releasing the first intermediate, prefusarin, as an alcohol with an open ring structure. The cytochrome P450 monooxygenase FUS8 participates in multiple oxidation processes at carbon C-20 and is able to use the FUS1 product as substrate, resulting in formation of 20-hydroxy-prefusarin. This reaction seems to be essential before the 2-pyrrolidone ring closure can be catalyzed by FUS2, generating 20-hydroxy-fusarin. FUS8 is able to further oxidizes carbon C-20 after ring closure, resulting in the formation of carboxy-fusarin C. As the last step, FUS9 methylates the hydroxyl group at C-21 to generate fusarin C. Fusarin C can then rearrange to epi-fusarin C, the (z)-isomers, and fusarin A and fusarin D. This Gibberella fujikuroi (strain CBS 195.34 / IMI 58289 / NRRL A-6831) (Bakanae and foot rot disease fungus) protein is Methyltransferase FUS9.